A 342-amino-acid polypeptide reads, in one-letter code: Antihemorrhagic factor cHLP-B (342 aa).

The N-terminal stretch at 1–19 is a signal peptide; the sequence is MNSLVALVLLGQMIGSTLS. Cystatin fetuin-A-type domains lie at 20-129 and 140-253; these read HHLQ…AKCH and RNCP…SDCV. 6 disulfides stabilise this stretch: Cys-28–Cys-333, Cys-85–Cys-96, Cys-110–Cys-128, Cys-142–Cys-145, Cys-204–Cys-216, and Cys-229–Cys-252. Residue Asn-95 is glycosylated (N-linked (GlcNAc...) asparagine). Asn-203 carries N-linked (GlcNAc...) asparagine glycosylation. N-linked (GlcNAc...) asparagine glycosylation is found at Asn-281 and Asn-292.

Belongs to the fetuin family. Homodimer. In terms of tissue distribution, expressed by the liver.

Its subcellular location is the secreted. In terms of biological role, potent inhibitor of hemorrhagic activity but also proteolytic activities. Inhibition occurs by formation of a non-covalent complex between this protein and the proteinases at their metalloproteinase domains. In Gloydius brevicauda (Korean slamosa snake), this protein is Antihemorrhagic factor cHLP-B.